Reading from the N-terminus, the 208-residue chain is dTTP/UTP pyrophosphatase (208 aa).

The Proton acceptor role is filled by D78.

Belongs to the Maf family. YhdE subfamily. It depends on a divalent metal cation as a cofactor.

It is found in the cytoplasm. The catalysed reaction is dTTP + H2O = dTMP + diphosphate + H(+). The enzyme catalyses UTP + H2O = UMP + diphosphate + H(+). In terms of biological role, nucleoside triphosphate pyrophosphatase that hydrolyzes dTTP and UTP. May have a dual role in cell division arrest and in preventing the incorporation of modified nucleotides into cellular nucleic acids. The polypeptide is dTTP/UTP pyrophosphatase (Maricaulis maris (strain MCS10) (Caulobacter maris)).